The primary structure comprises 138 residues: Ribosomal RNA large subunit methyltransferase H (138 aa).

S-adenosyl-L-methionine contacts are provided by residues Gly86 and Leu105–Phe110.

The protein belongs to the RNA methyltransferase RlmH family. In terms of assembly, homodimer.

Its subcellular location is the cytoplasm. It catalyses the reaction pseudouridine(1915) in 23S rRNA + S-adenosyl-L-methionine = N(3)-methylpseudouridine(1915) in 23S rRNA + S-adenosyl-L-homocysteine + H(+). Functionally, specifically methylates the pseudouridine at position 1915 (m3Psi1915) in 23S rRNA. The chain is Ribosomal RNA large subunit methyltransferase H from Prochlorococcus marinus (strain MIT 9215).